We begin with the raw amino-acid sequence, 95 residues long: DNA-directed RNA polymerase subunit Rpo11 (95 aa).

The protein belongs to the archaeal Rpo11/eukaryotic RPB11/RPC19 RNA polymerase subunit family. As to quaternary structure, part of the RNA polymerase complex.

The protein resides in the cytoplasm. It carries out the reaction RNA(n) + a ribonucleoside 5'-triphosphate = RNA(n+1) + diphosphate. DNA-dependent RNA polymerase (RNAP) catalyzes the transcription of DNA into RNA using the four ribonucleoside triphosphates as substrates. This is DNA-directed RNA polymerase subunit Rpo11 from Pyrococcus horikoshii (strain ATCC 700860 / DSM 12428 / JCM 9974 / NBRC 100139 / OT-3).